Reading from the N-terminus, the 355-residue chain is Proto-oncogene Wnt-3 (355 aa).

An N-terminal signal peptide occupies residues 1-21 (MEPHLLGLLLGLLLSGTRVLA). 11 disulfides stabilise this stretch: cysteine 80/cysteine 91, cysteine 131/cysteine 139, cysteine 141/cysteine 158, cysteine 206/cysteine 220, cysteine 208/cysteine 215, cysteine 284/cysteine 315, cysteine 300/cysteine 310, cysteine 314/cysteine 354, cysteine 330/cysteine 345, cysteine 332/cysteine 342, and cysteine 337/cysteine 338. The N-linked (GlcNAc...) asparagine glycan is linked to asparagine 90. Serine 212 carries O-palmitoleoyl serine; by PORCN lipidation. N-linked (GlcNAc...) asparagine glycosylation occurs at asparagine 301.

Belongs to the Wnt family. As to quaternary structure, forms a soluble 1:1 complex with AFM; this prevents oligomerization and is required for prolonged biological activity. The complex with AFM may represent the physiological form in body fluids. Interacts with PORCN. Interacts with WLS. In terms of processing, palmitoleoylation is required for efficient binding to frizzled receptors. Depalmitoleoylation leads to Wnt signaling pathway inhibition. As to expression, detected at low levels in adult brain. Dorsal portion of the neural tube, dorsal ectoderm, the branchial arches, and the limb buds.

Its subcellular location is the secreted. It localises to the extracellular space. The protein resides in the extracellular matrix. In terms of biological role, ligand for members of the frizzled family of seven transmembrane receptors. Functions in the canonical Wnt signaling pathway that results in activation of transcription factors of the TCF/LEF family. Required for normal gastrulation, formation of the primitive streak, and for the formation of the mesoderm during early embryogenesis. Required for normal formation of the apical ectodermal ridge and for normal embryonic limb development. The protein is Proto-oncogene Wnt-3 (Wnt3) of Mus musculus (Mouse).